The chain runs to 359 residues: MDKPHIQIMSIWLIVSTLLLLLMIVVGGITRLTNAGLSIVEWNPVSGIIPPISSEDWNNEFNKYTASPEFNLINNQITISEFKYIFFIEYIHRLLGRITGIIIIIPFLIFYYLKSLTKLQCYRLLLITCLVIIQGFMGWYMVKSGLKDTPYINHCRLAGHLLLAVVIYHQLIAELLIIIQPFKCYMLATSKANNSNSTSINVINLKTKLIVLNKIIIFLLYTQIMFGALVAGLDAGLIYNEFPNMGDSLIPIEILNQSIDFTMFDNQVLMQFIHRWFGILISCLIICYAIWLIILNKQALRGMGMVAACLVLVQVTTGIITLVYHVPILAALTHQVGAILILTTFLFIQNIVTNFELLH.

Helical transmembrane passes span 8–28 (IMSIWLIVSTLLLLLMIVVGG), 94–114 (LLGRITGIIIIIPFLIFYYLK), 124–144 (LLLITCLVIIQGFMGWYMVKS), 159–179 (GHLLLAVVIYHQLIAELLIII), and 215–235 (IIIFLLYTQIMFGALVAGLDA). Heme is bound at residue His274. The next 3 helical transmembrane spans lie at 276-296 (WFGILISCLIICYAIWLIILN), 303-323 (MGMVAACLVLVQVTTGIITLV), and 328-348 (ILAALTHQVGAILILTTFLFI). Position 334 (His334) interacts with heme.

The protein belongs to the COX15/CtaA family. Type 2 subfamily. In terms of assembly, interacts with CtaB. Requires heme b as cofactor.

Its subcellular location is the cell membrane. The enzyme catalyses Fe(II)-heme o + 2 A + H2O = Fe(II)-heme a + 2 AH2. It functions in the pathway porphyrin-containing compound metabolism; heme A biosynthesis; heme A from heme O: step 1/1. Its function is as follows. Catalyzes the conversion of heme O to heme A by two successive hydroxylations of the methyl group at C8. The first hydroxylation forms heme I, the second hydroxylation results in an unstable dihydroxymethyl group, which spontaneously dehydrates, resulting in the formyl group of heme A. This Orientia tsutsugamushi (strain Ikeda) (Rickettsia tsutsugamushi) protein is Heme A synthase.